The following is an 860-amino-acid chain: DNA mismatch repair protein MutS (860 aa).

Residue 607 to 614 (GPNMSGKS) coordinates ATP.

It belongs to the DNA mismatch repair MutS family.

This protein is involved in the repair of mismatches in DNA. It is possible that it carries out the mismatch recognition step. This protein has a weak ATPase activity. The protein is DNA mismatch repair protein MutS of Listeria welshimeri serovar 6b (strain ATCC 35897 / DSM 20650 / CCUG 15529 / CIP 8149 / NCTC 11857 / SLCC 5334 / V8).